The sequence spans 208 residues: Urease accessory protein UreG 1 (208 aa).

Residue G14–T21 coordinates GTP.

The protein belongs to the SIMIBI class G3E GTPase family. UreG subfamily. Homodimer. UreD, UreF and UreG form a complex that acts as a GTP-hydrolysis-dependent molecular chaperone, activating the urease apoprotein by helping to assemble the nickel containing metallocenter of UreC. The UreE protein probably delivers the nickel.

The protein localises to the cytoplasm. Facilitates the functional incorporation of the urease nickel metallocenter. This process requires GTP hydrolysis, probably effectuated by UreG. This Brucella ovis (strain ATCC 25840 / 63/290 / NCTC 10512) protein is Urease accessory protein UreG 1.